A 170-amino-acid chain; its full sequence is Urease accessory protein UreE (170 aa).

Residues P137–H170 form a disordered region. Basic and acidic residues predominate over residues A148–H170.

It belongs to the UreE family.

The protein resides in the cytoplasm. Involved in urease metallocenter assembly. Binds nickel. Probably functions as a nickel donor during metallocenter assembly. This is Urease accessory protein UreE from Pseudoalteromonas translucida (strain TAC 125).